An 86-amino-acid chain; its full sequence is Cytochrome c oxidase subunit 6B1 (86 aa).

Alanine 2 carries the N-acetylalanine modification. The CHCH domain occupies 27-73 (TRNCWQNYLDFHRCQKAMTAKGGDISVCEWYQRVYQSLCPTSWVTDW). Positions 30–40 (CWQNYLDFHRC) match the Cx9C motif motif. 2 disulfide bridges follow: cysteine 30/cysteine 65 and cysteine 40/cysteine 54. A Cx10C motif motif is present at residues 54–65 (CEWYQRVYQSLC).

Belongs to the cytochrome c oxidase subunit 6B family. As to quaternary structure, component of the cytochrome c oxidase (complex IV, CIV), a multisubunit enzyme composed of 14 subunits. The complex is composed of a catalytic core of 3 subunits MT-CO1, MT-CO2 and MT-CO3, encoded in the mitochondrial DNA, and 11 supernumerary subunits COX4I, COX5A, COX5B, COX6A, COX6B, COX6C, COX7A, COX7B, COX7C, COX8 and NDUFA4, which are encoded in the nuclear genome. The complex exists as a monomer or a dimer and forms supercomplexes (SCs) in the inner mitochondrial membrane with NADH-ubiquinone oxidoreductase (complex I, CI) and ubiquinol-cytochrome c oxidoreductase (cytochrome b-c1 complex, complex III, CIII), resulting in different assemblies (supercomplex SCI(1)III(2)IV(1) and megacomplex MCI(2)III(2)IV(2)).

The protein localises to the mitochondrion inner membrane. It participates in energy metabolism; oxidative phosphorylation. Functionally, component of the cytochrome c oxidase, the last enzyme in the mitochondrial electron transport chain which drives oxidative phosphorylation. The respiratory chain contains 3 multisubunit complexes succinate dehydrogenase (complex II, CII), ubiquinol-cytochrome c oxidoreductase (cytochrome b-c1 complex, complex III, CIII) and cytochrome c oxidase (complex IV, CIV), that cooperate to transfer electrons derived from NADH and succinate to molecular oxygen, creating an electrochemical gradient over the inner membrane that drives transmembrane transport and the ATP synthase. Cytochrome c oxidase is the component of the respiratory chain that catalyzes the reduction of oxygen to water. Electrons originating from reduced cytochrome c in the intermembrane space (IMS) are transferred via the dinuclear copper A center (CU(A)) of subunit 2 and heme A of subunit 1 to the active site in subunit 1, a binuclear center (BNC) formed by heme A3 and copper B (CU(B)). The BNC reduces molecular oxygen to 2 water molecules using 4 electrons from cytochrome c in the IMS and 4 protons from the mitochondrial matrix. In Pongo abelii (Sumatran orangutan), this protein is Cytochrome c oxidase subunit 6B1 (COX6B1).